Reading from the N-terminus, the 276-residue chain is Shikimate dehydrogenase (NADP(+)) (276 aa).

Residues 15 to 17 (SKS) and T62 contribute to the shikimate site. The active-site Proton acceptor is K66. E78 contacts NADP(+). N87 and D103 together coordinate shikimate. NADP(+) is bound by residues 128 to 132 (GAGGA) and I217. Position 219 (Y219) interacts with shikimate. G240 is a binding site for NADP(+).

The protein belongs to the shikimate dehydrogenase family. In terms of assembly, homodimer.

It catalyses the reaction shikimate + NADP(+) = 3-dehydroshikimate + NADPH + H(+). Its pathway is metabolic intermediate biosynthesis; chorismate biosynthesis; chorismate from D-erythrose 4-phosphate and phosphoenolpyruvate: step 4/7. Its function is as follows. Involved in the biosynthesis of the chorismate, which leads to the biosynthesis of aromatic amino acids. Catalyzes the reversible NADPH linked reduction of 3-dehydroshikimate (DHSA) to yield shikimate (SA). The polypeptide is Shikimate dehydrogenase (NADP(+)) (Lysinibacillus sphaericus (strain C3-41)).